Reading from the N-terminus, the 316-residue chain is tRNA-cytidine(32) 2-sulfurtransferase (316 aa).

Positions 45–50 (SGGKDS) match the PP-loop motif motif. Residues cysteine 120, cysteine 123, and cysteine 211 each contribute to the [4Fe-4S] cluster site.

Belongs to the TtcA family. As to quaternary structure, homodimer. Mg(2+) serves as cofactor. [4Fe-4S] cluster is required as a cofactor.

The protein resides in the cytoplasm. The catalysed reaction is cytidine(32) in tRNA + S-sulfanyl-L-cysteinyl-[cysteine desulfurase] + AH2 + ATP = 2-thiocytidine(32) in tRNA + L-cysteinyl-[cysteine desulfurase] + A + AMP + diphosphate + H(+). It functions in the pathway tRNA modification. Catalyzes the ATP-dependent 2-thiolation of cytidine in position 32 of tRNA, to form 2-thiocytidine (s(2)C32). The sulfur atoms are provided by the cysteine/cysteine desulfurase (IscS) system. The protein is tRNA-cytidine(32) 2-sulfurtransferase of Shewanella sediminis (strain HAW-EB3).